The sequence spans 699 residues: Chitin synthase 7 (699 aa).

6 helical membrane passes run 19-39, 58-80, 98-118, 445-465, 474-494, and 507-527; these read IVGV…AAFL, SVVV…VVTL, LQWF…LFCI, FMQN…LAII, LPVG…IYFG, and VMFV…IFTA. A disordered region spans residues 628-648; sequence AAGGSGEASEPGTRWAPDPRE.

Belongs to the chitin synthase family. Class VI subfamily.

It localises to the cell membrane. The catalysed reaction is [(1-&gt;4)-N-acetyl-beta-D-glucosaminyl](n) + UDP-N-acetyl-alpha-D-glucosamine = [(1-&gt;4)-N-acetyl-beta-D-glucosaminyl](n+1) + UDP + H(+). Functionally, polymerizes chitin, a structural polymer of the cell wall and septum, by transferring the sugar moiety of UDP-GlcNAc to the non-reducing end of the growing chitin polymer. Plays a role in cell wall integrity. Required to successfully penetrate the host plants and thus plays a key role in pathogenicity. The protein is Chitin synthase 7 of Verticillium dahliae (strain VdLs.17 / ATCC MYA-4575 / FGSC 10137) (Verticillium wilt).